Consider the following 462-residue polypeptide: Kinetochore protein Nuf2-A (462 aa).

Coiled coils occupy residues 143–277 (SSYK…DKCD) and 308–461 (EIHR…RLSR). Residues 239–259 (RMKSQIVESPEQRKSKTERMK) are disordered. Residues 248 to 259 (PEQRKSKTERMK) are compositionally biased toward basic and acidic residues.

Belongs to the NUF2 family. In terms of assembly, component of the NDC80 complex, which is composed of ndc80, cdca1, spbc24 and spbc25. The NDC80 complex interacts with mis12 and zwint.

Its subcellular location is the nucleus. The protein localises to the chromosome. It localises to the centromere. The protein resides in the kinetochore. Functionally, acts as a component of the essential kinetochore-associated NDC80 complex, which is required for chromosome segregation and spindle checkpoint activity. Required for kinetochore integrity and the organization of stable microtubule binding sites in the outer plate of the kinetochore. The NDC80 complex synergistically enhances the affinity of the SKA1 complex for microtubules and may allow the NDC80 complex to track depolymerizing microtubules. The protein is Kinetochore protein Nuf2-A (nuf2-a) of Xenopus laevis (African clawed frog).